The following is a 504-amino-acid chain: Cytochrome P450 3A2 (504 aa).

Residue cysteine 443 coordinates heme.

Belongs to the cytochrome P450 family. Heme is required as a cofactor. As to expression, expressed in liver.

It is found in the endoplasmic reticulum membrane. Its subcellular location is the microsome membrane. The catalysed reaction is an organic molecule + reduced [NADPH--hemoprotein reductase] + O2 = an alcohol + oxidized [NADPH--hemoprotein reductase] + H2O + H(+). Functionally, cytochromes P450 are a group of heme-thiolate monooxygenases. In liver microsomes, this enzyme is involved in an NADPH-dependent electron transport pathway. It oxidizes a variety of structurally unrelated compounds, including steroids, fatty acids, and xenobiotics. The chain is Cytochrome P450 3A2 (Cyp3a2) from Rattus norvegicus (Rat).